We begin with the raw amino-acid sequence, 228 residues long: ATP-dependent dethiobiotin synthetase BioD (228 aa).

12–17 (EIGKTT) contributes to the ATP binding site. Position 16 (Thr16) interacts with Mg(2+). The active site involves Lys37. Residue Ser41 coordinates substrate. Residues Asp54, 116 to 119 (EGAG), and 205 to 207 (PRL) each bind ATP. Mg(2+) contacts are provided by Asp54 and Glu116.

It belongs to the dethiobiotin synthetase family. As to quaternary structure, homodimer. Mg(2+) is required as a cofactor.

It is found in the cytoplasm. The enzyme catalyses (7R,8S)-7,8-diammoniononanoate + CO2 + ATP = (4R,5S)-dethiobiotin + ADP + phosphate + 3 H(+). Its pathway is cofactor biosynthesis; biotin biosynthesis; biotin from 7,8-diaminononanoate: step 1/2. In terms of biological role, catalyzes a mechanistically unusual reaction, the ATP-dependent insertion of CO2 between the N7 and N8 nitrogen atoms of 7,8-diaminopelargonic acid (DAPA, also called 7,8-diammoniononanoate) to form a ureido ring. In Pseudomonas aeruginosa (strain LESB58), this protein is ATP-dependent dethiobiotin synthetase BioD.